The chain runs to 139 residues: ATP synthase epsilon chain (139 aa).

It belongs to the ATPase epsilon chain family. As to quaternary structure, F-type ATPases have 2 components, CF(1) - the catalytic core - and CF(0) - the membrane proton channel. CF(1) has five subunits: alpha(3), beta(3), gamma(1), delta(1), epsilon(1). CF(0) has three main subunits: a, b and c.

It is found in the cell inner membrane. Its function is as follows. Produces ATP from ADP in the presence of a proton gradient across the membrane. This is ATP synthase epsilon chain from Actinobacillus pleuropneumoniae serotype 7 (strain AP76).